We begin with the raw amino-acid sequence, 195 residues long: Interferon tau-9 (195 aa).

The N-terminal stretch at 1 to 23 (MAFVLSLLMALVLVSYGPGGSLG) is a signal peptide. 2 disulfides stabilise this stretch: C24–C122 and C52–C162.

It belongs to the alpha/beta interferon family. IFN-alphaII subfamily. As to expression, constitutively and exclusively expressed in the mononuclear cells of the extraembryonic trophectoderm.

It is found in the secreted. In terms of biological role, paracrine hormone primarily responsible for maternal recognition of pregnancy. Interacts with endometrial receptors, probably type I interferon receptors, and blocks estrogen receptor expression, preventing the estrogen-induced increase in oxytocin receptor expression in the endometrium. This results in the suppression of the pulsatile endometrial release of the luteolytic hormone prostaglandin F2-alpha, hindering the regression of the corpus luteum (luteolysis) and therefore a return to ovarian cyclicity. This, and a possible direct effect of IFN-tau on prostaglandin synthesis, leads in turn to continued ovarian progesterone secretion, which stimulates the secretion by the endometrium of the nutrients required for the growth of the conceptus. In summary, displays particularly high antiviral and antiproliferative potency concurrently with particular weak cytotoxicity, high antiluteolytic activity and immunomodulatory properties. In contrast with other IFNs, IFN-tau is not virally inducible. The chain is Interferon tau-9 (IFNT9) from Ovis aries (Sheep).